Reading from the N-terminus, the 218-residue chain is Large ribosomal subunit protein bL25 (218 aa).

Belongs to the bacterial ribosomal protein bL25 family. CTC subfamily. In terms of assembly, part of the 50S ribosomal subunit; part of the 5S rRNA/L5/L18/L25 subcomplex. Contacts the 5S rRNA. Binds to the 5S rRNA independently of L5 and L18.

Functionally, this is one of the proteins that binds to the 5S RNA in the ribosome where it forms part of the central protuberance. The polypeptide is Large ribosomal subunit protein bL25 (Polaromonas naphthalenivorans (strain CJ2)).